Here is a 426-residue protein sequence, read N- to C-terminus: Serine--tRNA ligase (426 aa).

Residue Thr233 to Glu235 participates in L-serine binding. Arg264 to Glu266 contacts ATP. Glu287 is an L-serine binding site. Glu351 to Ser354 contacts ATP. Ser387 provides a ligand contact to L-serine.

This sequence belongs to the class-II aminoacyl-tRNA synthetase family. Type-1 seryl-tRNA synthetase subfamily. Homodimer. The tRNA molecule binds across the dimer.

Its subcellular location is the cytoplasm. It catalyses the reaction tRNA(Ser) + L-serine + ATP = L-seryl-tRNA(Ser) + AMP + diphosphate + H(+). The enzyme catalyses tRNA(Sec) + L-serine + ATP = L-seryl-tRNA(Sec) + AMP + diphosphate + H(+). Its pathway is aminoacyl-tRNA biosynthesis; selenocysteinyl-tRNA(Sec) biosynthesis; L-seryl-tRNA(Sec) from L-serine and tRNA(Sec): step 1/1. Its function is as follows. Catalyzes the attachment of serine to tRNA(Ser). Is also able to aminoacylate tRNA(Sec) with serine, to form the misacylated tRNA L-seryl-tRNA(Sec), which will be further converted into selenocysteinyl-tRNA(Sec). The polypeptide is Serine--tRNA ligase (Xanthomonas euvesicatoria pv. vesicatoria (strain 85-10) (Xanthomonas campestris pv. vesicatoria)).